A 227-amino-acid chain; its full sequence is Ribosomal RNA small subunit methyltransferase G (227 aa).

S-adenosyl-L-methionine is bound by residues G74, L79, 124-125 (AE), and R142.

The protein belongs to the methyltransferase superfamily. RNA methyltransferase RsmG family.

The protein localises to the cytoplasm. Functionally, specifically methylates the N7 position of guanine in position 518 of 16S rRNA. In Mycolicibacterium vanbaalenii (strain DSM 7251 / JCM 13017 / BCRC 16820 / KCTC 9966 / NRRL B-24157 / PYR-1) (Mycobacterium vanbaalenii), this protein is Ribosomal RNA small subunit methyltransferase G.